Reading from the N-terminus, the 136-residue chain is Small ribosomal subunit protein uS12 (136 aa).

Asp-89 is subject to 3-methylthioaspartic acid. Residues 104 to 136 (TAGVNGRTQRRSKYGAKRPKPGQAAAAAKGKKK) are disordered. Residues 111–123 (TQRRSKYGAKRPK) are compositionally biased toward basic residues. The span at 124-136 (PGQAAAAAKGKKK) shows a compositional bias: low complexity.

This sequence belongs to the universal ribosomal protein uS12 family. In terms of assembly, part of the 30S ribosomal subunit. Contacts proteins S8 and S17. May interact with IF1 in the 30S initiation complex.

Its function is as follows. With S4 and S5 plays an important role in translational accuracy. Interacts with and stabilizes bases of the 16S rRNA that are involved in tRNA selection in the A site and with the mRNA backbone. Located at the interface of the 30S and 50S subunits, it traverses the body of the 30S subunit contacting proteins on the other side and probably holding the rRNA structure together. The combined cluster of proteins S8, S12 and S17 appears to hold together the shoulder and platform of the 30S subunit. This Parabacteroides distasonis (strain ATCC 8503 / DSM 20701 / CIP 104284 / JCM 5825 / NCTC 11152) protein is Small ribosomal subunit protein uS12.